The primary structure comprises 652 residues: Ethylmalonyl-CoA mutase (652 aa).

One can recognise a B12-binding domain in the interval 519–647 (PLKFVVGKPG…MDIVGLVDRT (129 aa)). H532 contacts adenosylcob(III)alamin.

The protein belongs to the methylmalonyl-CoA mutase family. In terms of assembly, homodimer. Requires adenosylcob(III)alamin as cofactor.

It catalyses the reaction (2R)-ethylmalonyl-CoA = (2S)-methylsuccinyl-CoA. Its function is as follows. Radical enzyme that catalyzes the transformation of (2R)-ethylmalonyl-CoA to (2S)-methylsuccinyl-CoA. Is involved in the ethylmalonyl-CoA pathway for acetyl-CoA assimilation required for R.sphaeroides growth on acetate as sole carbon source. Is highly specific for its substrate, ethylmalonyl-CoA, and accepts methylmalonyl-CoA only at 0.2% relative activity. The chain is Ethylmalonyl-CoA mutase from Cereibacter sphaeroides (strain ATCC 17023 / DSM 158 / JCM 6121 / CCUG 31486 / LMG 2827 / NBRC 12203 / NCIMB 8253 / ATH 2.4.1.) (Rhodobacter sphaeroides).